The primary structure comprises 224 residues: Putative adhesin RMA_1308 (224 aa).

Residues 1–22 form the signal peptide; sequence MQKLLLIAATSATILSSSLSFA.

In Rickettsia massiliae (strain Mtu5), this protein is Putative adhesin RMA_1308.